The chain runs to 133 residues: Interferon-induced transmembrane protein 3 (133 aa).

The Cytoplasmic portion of the chain corresponds to 1–57 (MNHTVQTFFSPVNSGQPPNYEMLKEEHEVAVLGAPHNPAPPTSTVIHIRSETSVPDH). Phosphotyrosine is present on Tyr-20. Lys-24 is covalently cross-linked (Glycyl lysine isopeptide (Lys-Gly) (interchain with G-Cter in ubiquitin)). The segment at residues 58 to 78 (VVWSLFNTLFMNPCCLGFIAF) is an intramembrane region (helical). Residues 60–93 (WSLFNTLFMNPCCLGFIAFAYSVKSRDRKMVGDV) form an interaction with SPP1 region. S-palmitoyl cysteine attachment occurs at residues Cys-71 and Cys-72. Residues 79–107 (AYSVKSRDRKMVGDVTGAQAYASTAKCLN) are Cytoplasmic-facing. Residues Lys-83, Lys-88, and Lys-104 each participate in a glycyl lysine isopeptide (Lys-Gly) (interchain with G-Cter in ubiquitin) cross-link. The S-palmitoyl cysteine moiety is linked to residue Cys-105. A helical transmembrane segment spans residues 108 to 128 (IWALILGILMTILLIVIPVLI). The interval 108 to 133 (IWALILGILMTILLIVIPVLIFQAYG) is interaction with VAPA. Topologically, residues 129–133 (FQAYG) are extracellular.

This sequence belongs to the CD225/Dispanin family. As to quaternary structure, interacts with ATP6V0B. Interacts with CD81. Interacts with SPP1; the interaction reduces OPN expression. Interacts with VAPA. Interacts with BRI3 (isoforms 1 and 2); the interaction with isoform 2 is weaker than with isoform 1. Post-translationally, palmitoylation on membrane-proximal cysteines controls clustering in membrane compartments and antiviral activity against influenza virus and hepatitis C virus (HCV). Has no effect on anti-SARS-CoV-2 activity. Not glycosylated. In terms of processing, polyubiquitinated with both 'Lys-48' and 'Lys-63' linkages. Ubiquitination negatively regulates antiviral activity. Lys-24 is the most prevalent ubiquitination site. Post-translationally, phosphorylation at Tyr-20 is required for endosomal and lysosomal location.

It localises to the cell membrane. It is found in the late endosome membrane. The protein resides in the early endosome membrane. The protein localises to the lysosome membrane. Its subcellular location is the cytoplasm. It localises to the perinuclear region. Functionally, IFN-induced antiviral protein which disrupts intracellular cholesterol homeostasis. Inhibits the entry of viruses to the host cell cytoplasm by preventing viral fusion with cholesterol depleted endosomes. May inactivate new enveloped viruses which buds out of the infected cell, by letting them go out with a cholesterol depleted membrane. Active against multiple viruses, including influenza A virus, SARS coronaviruses (SARS-CoV and SARS-CoV-2), Marburg virus (MARV), Ebola virus (EBOV), Dengue virus (DNV), West Nile virus (WNV), human immunodeficiency virus type 1 (HIV-1), hepatitis C virus (HCV) and vesicular stomatitis virus (VSV). Can inhibit: influenza virus hemagglutinin protein-mediated viral entry, MARV and EBOV GP1,2-mediated viral entry, SARS-CoV and SARS-CoV-2 S protein-mediated viral entry and VSV G protein-mediated viral entry. Plays a critical role in the structural stability and function of vacuolar ATPase (v-ATPase). Establishes physical contact with the v-ATPase of endosomes which is critical for proper clathrin localization and is also required for the function of the v-ATPase to lower the pH in phagocytic endosomes thus establishing an antiviral state. In hepatocytes, IFITM proteins act in a coordinated manner to restrict HCV infection by targeting the endocytosed HCV virion for lysosomal degradation. IFITM2 and IFITM3 display anti-HCV activity that may complement the anti-HCV activity of IFITM1 by inhibiting the late stages of HCV entry, possibly in a coordinated manner by trapping the virion in the endosomal pathway and targeting it for degradation at the lysosome. Exerts opposing activities on SARS-CoV-2, including amphipathicity-dependent restriction of virus at endosomes and amphipathicity-independent enhancement of infection at the plasma membrane. The protein is Interferon-induced transmembrane protein 3 of Homo sapiens (Human).